Consider the following 242-residue polypeptide: N-alpha-acetyltransferase 60 (242 aa).

At 1–192 (MTEVVPSSAL…GGHPPWTILD (192 aa)) the chain is on the cytoplasmic side. The N-acetyltransferase domain occupies 13–182 (VSLRLLCHDD…DGFTYVLYIN (170 aa)). Substrate is bound at residue Tyr38. Lys79 carries the N6-acetyllysine; by autocatalysis modification. Residue Tyr97 is part of the active site. A substrate-binding site is contributed by Leu99. Acetyl-CoA is bound at residue 101-103 (LGV). An N6-acetyllysine; by autocatalysis mark is found at Lys105, Lys109, and Lys121. 109–114 (KHGIGS) is an acetyl-CoA binding site. His138 is a catalytic residue. Residues Asn143 and 150 to 153 (YENR) each bind acetyl-CoA. Lys156 carries the N6-acetyllysine; by autocatalysis modification. The required for homodimerization stretch occupies residues 162–173 (PYYYSIRGVLKD). Residue Tyr165 participates in substrate binding. The helical intramembrane region spans 193 to 236 (YIQHLGSALASLSPCSIPHRVYRQAHSLLCSFLPWSGISSKSGI). Residues 237-242 (EYSRTM) lie on the Cytoplasmic side of the membrane.

Belongs to the acetyltransferase family. NAA60 subfamily. As to quaternary structure, monomer and homodimer; monomer in presence of substrate and homodimer in its absence. Acetylated: autoacetylation is required for optimal acetyltransferase activity.

The protein localises to the golgi apparatus membrane. The catalysed reaction is N-terminal L-methionyl-[transmembrane protein] + acetyl-CoA = N-terminal N(alpha)-acetyl-L-methionyl-[transmembrane protein] + CoA + H(+). It carries out the reaction L-lysyl-[protein] + acetyl-CoA = N(6)-acetyl-L-lysyl-[protein] + CoA + H(+). N-alpha-acetyltransferase that specifically mediates the acetylation of N-terminal residues of the transmembrane proteins, with a strong preference for N-termini facing the cytosol. Displays N-terminal acetyltransferase activity towards a range of N-terminal sequences including those starting with Met-Lys, Met-Val, Met-Ala and Met-Met. Required for normal chromosomal segregation during anaphase. May also show histone acetyltransferase activity; such results are however unclear in vivo and would require additional experimental evidences. The sequence is that of N-alpha-acetyltransferase 60 from Homo sapiens (Human).